A 594-amino-acid chain; its full sequence is DNA polymerase II small subunit (594 aa).

The protein belongs to the DNA polymerase delta/II small subunit family. As to quaternary structure, heterodimer of a large subunit and a small subunit.

It carries out the reaction DNA(n) + a 2'-deoxyribonucleoside 5'-triphosphate = DNA(n+1) + diphosphate. The enzyme catalyses Exonucleolytic cleavage in the 3'- to 5'-direction to yield nucleoside 5'-phosphates.. Possesses two activities: a DNA synthesis (polymerase) and an exonucleolytic activity that degrades single-stranded DNA in the 3' to 5' direction. Has a template-primer preference which is characteristic of a replicative DNA polymerase. The sequence is that of DNA polymerase II small subunit (polB) from Methanocaldococcus jannaschii (strain ATCC 43067 / DSM 2661 / JAL-1 / JCM 10045 / NBRC 100440) (Methanococcus jannaschii).